Here is a 145-residue protein sequence, read N- to C-terminus: Phospholipase A2 phospholipin (145 aa).

An N-terminal signal peptide occupies residues 1-15 (MVDLARRCSGSTEGR). Ca(2+) is bound by residues W24, G26, and G28. Cystine bridges form between C25/C46, C45/C84, C52/C77, C75/C116, and C121/C132. Residue H49 is part of the active site. D50 contacts Ca(2+). The propeptide occupies 124-128 (KRSGR).

This sequence belongs to the phospholipase A2 family. Group III subfamily. Heterodimer composed of a small subunit and a large subunit; disulfid-linked. Ca(2+) is required as a cofactor. As to expression, expressed by the venom gland.

The protein localises to the secreted. The enzyme catalyses a 1,2-diacyl-sn-glycero-3-phosphocholine + H2O = a 1-acyl-sn-glycero-3-phosphocholine + a fatty acid + H(+). In terms of biological role, scorpion venom phospholipase A2 (PLA2) that contains enzymatic activity, but does not inhibit ryanodine receptors in contrary to imperatoxin-1, another heterodimer of P.imperator venom. PLA2 catalyzes the calcium-dependent hydrolysis of the 2-acyl groups in 3-sn-phosphoglycerides. The protein is Phospholipase A2 phospholipin of Pandinus imperator (Emperor scorpion).